A 612-amino-acid chain; its full sequence is Vitamin B12 transporter BtuB (612 aa).

Positions 1 to 20 (MIKKSLLCTALSVTAFSGWA) are cleaved as a signal peptide. A TonB box motif is present at residues 26–33 (DTLVVTAN). Positions 38–152 (PRSAVLAPIT…IGGVVNIITT (115 aa)) constitute a TBDR plug domain. Residues Ser85, Asn92, and 110–111 (VS) each bind cyanocob(III)alamin. A TBDR beta-barrel domain is found at 155–612 (KPGTELTAGV…EYTLSGSYTF (458 aa)). The next 3 membrane-spanning stretches (beta stranded) occupy residues 158 to 165 (TELTAGVG), 169 to 178 (YQNYDVSTQQ), and 184 to 195 (TRVTLMGDYAYT). The Ca(2+) site is built by Asp199, Gln211, Asp213, and Asp215. A run of 2 beta stranded transmembrane segments spans residues 217–227 (FLSKTLYGALE) and 232–248 (DTWSGFVRGYGYDNRTN). The Ca(2+) site is built by Tyr249, Asp250, and Asp261. The next 14 beta stranded transmembrane spans lie at 263–277 (RKLYSQSWDAGLRFN), 279–296 (ELIQSQLVSSYSHSKDYN), 309–325 (TLDEMKQYNVQWSNSIV), 328–337 (HGNVGAGVDW), 353–369 (YDQRNTGLYLTGLQQLG), 371–381 (FTFEGAARSDD), 385–400 (FGRHGTWQTSAGWEFI), 403–417 (YRFIASYGTSYKAPN), 434–443 (QSKQWEGAFE), 449–458 (VNWRVSGYRN), 473–490 (YFNEGKVRIKGVEATANF), 494–509 (PLAHTLSYDMVDSRNA), 517–529 (RRSKQQVKYQLDW), and 535–550 (DWGLTYHYLGTRYDTD). Position 309 (Thr309) interacts with cyanocob(III)alamin. Position 517 (Arg517) interacts with cyanocob(III)alamin. Tyr551 provides a ligand contact to cyanocob(III)alamin. The next 3 membrane-spanning stretches (beta stranded) occupy residues 556–570 (PVKMGGVSLWDLAVS), 583–594 (IANRFDKDYETV), and 600–612 (AGREYTLSGSYTF). Residues 595-612 (YGYATAGREYTLSGSYTF) carry the TonB C-terminal box motif.

It belongs to the TonB-dependent receptor family. BtuB (TC 1.B.14.3.1) subfamily.

Its subcellular location is the cell outer membrane. Functionally, involved in the active translocation of vitamin B12 (cyanocobalamin) across the outer membrane to the periplasmic space. It derives its energy for transport by interacting with the trans-periplasmic membrane protein TonB. The protein is Vitamin B12 transporter BtuB of Citrobacter freundii.